A 416-amino-acid chain; its full sequence is Tyrosine--tRNA ligase (416 aa).

Tyr-39 contributes to the L-tyrosine binding site. A 'HIGH' region motif is present at residues 44–53 (CTAPSLHAGH). L-tyrosine contacts are provided by Tyr-176 and Gln-180. The 'KMSKS' region signature appears at 236-240 (KMGKT). Lys-239 provides a ligand contact to ATP. Residues 349-414 (ISLVDLLHDT…AGKKRHIKVV (66 aa)) enclose the S4 RNA-binding domain.

It belongs to the class-I aminoacyl-tRNA synthetase family. TyrS type 1 subfamily. Homodimer.

It is found in the cytoplasm. The catalysed reaction is tRNA(Tyr) + L-tyrosine + ATP = L-tyrosyl-tRNA(Tyr) + AMP + diphosphate + H(+). Catalyzes the attachment of tyrosine to tRNA(Tyr) in a two-step reaction: tyrosine is first activated by ATP to form Tyr-AMP and then transferred to the acceptor end of tRNA(Tyr). The sequence is that of Tyrosine--tRNA ligase from Wolbachia pipientis wMel.